Consider the following 84-residue polypeptide: Anthracycline acyl carrier protein DpsG (84 aa).

Residues 3–80 enclose the Carrier domain; it reads ELSLAELREI…SMLIFVNERL (78 aa). An O-(pantetheine 4'-phosphoryl)serine modification is found at S40.

It functions in the pathway antibiotic biosynthesis; daunorubicin biosynthesis. It participates in antibiotic biosynthesis; carminomycin biosynthesis. The protein operates within antibiotic biosynthesis; rhodomycin biosynthesis. Its pathway is antibiotic biosynthesis; aclacinomycin biosynthesis. Functionally, involved in the biosynthesis of aklanonate which is an important precursor common to the formation of the clinically significant anthracyclines such as carminomycin, daunorubicin (daunomycin), rhodomycin, aclacinomycin T (aklavin) and aclacinomycin A (aclarubicin). These compounds are aromatic polyketide antibiotics that exhibit high cytotoxicity and are widely applied in the chemotherapy of a variety of cancers. In Streptomyces peucetius, this protein is Anthracycline acyl carrier protein DpsG (dpsG).